The following is a 235-amino-acid chain: Ribonuclease PH (235 aa).

Residues Arg-86 and 124–126 (GTR) each bind phosphate.

This sequence belongs to the RNase PH family. As to quaternary structure, homohexameric ring arranged as a trimer of dimers.

It catalyses the reaction tRNA(n+1) + phosphate = tRNA(n) + a ribonucleoside 5'-diphosphate. Functionally, phosphorolytic 3'-5' exoribonuclease that plays an important role in tRNA 3'-end maturation. Removes nucleotide residues following the 3'-CCA terminus of tRNAs; can also add nucleotides to the ends of RNA molecules by using nucleoside diphosphates as substrates, but this may not be physiologically important. Probably plays a role in initiation of 16S rRNA degradation (leading to ribosome degradation) during starvation. The protein is Ribonuclease PH of Francisella tularensis subsp. mediasiatica (strain FSC147).